A 163-amino-acid polypeptide reads, in one-letter code: Mating-type protein ALPHA2 (163 aa).

Residues 80 to 142 constitute a DNA-binding region (homeobox; TALE-type); that stretch reads IEKRSKRFPK…NRRRKERTLT (63 aa).

This sequence belongs to the TALE/M-ATYP homeobox family.

It is found in the nucleus. Functionally, mating type proteins are sequence specific DNA-binding proteins that act as master switches in yeast differentiation by controlling gene expression in a cell type-specific fashion. The chain is Mating-type protein ALPHA2 (MATALPHA2) from Pichia angusta (Yeast).